We begin with the raw amino-acid sequence, 21 residues long: 20 kDa chaperonin, chloroplastic (21 aa).

This sequence belongs to the GroES chaperonin family. Forms stable complexes with CPN60 in the presence of ATP.

The protein localises to the plastid. It is found in the chloroplast. In terms of biological role, seems to function only as a co-chaperone, along with cpn60, and in certain cases is essential for the discharge of biologically active proteins from cpn60. This is 20 kDa chaperonin, chloroplastic (CPN21) from Pisum sativum (Garden pea).